We begin with the raw amino-acid sequence, 461 residues long: MALSMKMRANARVSGRRVAAVAPRVVPFSSASSSVLRSGFALRCLWTSAAWAALASVVEAVKKSVGDLHKADLEGKRVFVRADLNVPLDKATLAITDDTRIRAAVPTLKYLLDNGAKVLLTSHLGRPKGGPEDKYRLTPVVARLSELLGKPVTKVDDCIGPEVEKAVGAMKNGELLLLENCRFYKEEEKNEPEFAKKLAANADLYVNDAFGTAHRAHASTEGVTKFLKPSVAGFLLQKELDYLDGAVSNPKRPFVAIVGGSKVSSKITVIEALMEKCDKIIIGGGMIFTFYKARALKVGSSLVEDDKIELAKKLEEMAKAKGVQLLLPTDVVVADKFDANANTQTVPITAIPDGWMGLDIGPDSVKTFNDALADAKTVVWNGPMGVFEFPQVRQRTVSIANTLAGLTPKGCITIIGGGDSVAAVEQAGVAEKMSHISTGGGASLELLEGKVLPGVAALDEK.

The transit peptide at 1 to 60 (MALSMKMRANARVSGRRVAAVAPRVVPFSSASSSVLRSGFALRCLWTSAAWAALASVVEA) directs the protein to the chloroplast. 11 residues coordinate (2R)-3-phosphoglycerate: Ala82, Asp83, Asn85, Arg100, Ser122, His123, Gly125, Arg126, Arg182, His214, and Arg215. ADP is bound at residue Gly260. Gly260 contributes to the CDP binding site. The AMP site is built by Lys262 and Lys266. Residue Lys266 participates in ATP binding. ADP is bound at residue Gly284. Gly284 serves as a coordination point for CDP. 2 residues coordinate AMP: Gly285 and Gly357. ATP is bound by residues Gly285 and Gly357. CDP is bound by residues Gly382 and Phe387. Phe387 contributes to the ADP binding site. An AMP-binding site is contributed by Glu388. ATP contacts are provided by Glu388, Asp419, and Ser420. Asp419 provides a ligand contact to Mg(2+).

This sequence belongs to the phosphoglycerate kinase family. In terms of assembly, monomer. Mg(2+) serves as cofactor.

It localises to the plastid. The protein localises to the chloroplast. It carries out the reaction (2R)-3-phosphoglycerate + ATP = (2R)-3-phospho-glyceroyl phosphate + ADP. It functions in the pathway carbohydrate biosynthesis; Calvin cycle. The polypeptide is Phosphoglycerate kinase, chloroplastic (Chlamydomonas reinhardtii (Chlamydomonas smithii)).